Reading from the N-terminus, the 147-residue chain is MKALLTLVFCLLPLAAQGKVYSRCELAAAMKRLGLDNYRGYSLGNWVCAANYESGFNTQATNRNTDGSTDYGILQINSRWWCDNGKTPRSKNACGIPCSVLLRSDITEAVRCAKRIVSDGDGMNAWVAWRNRCRGTDVSKWIRGCRL.

The N-terminal stretch at 1–18 (MKALLTLVFCLLPLAAQG) is a signal peptide. Residues 19–147 (KVYSRCELAA…VSKWIRGCRL (129 aa)) form the C-type lysozyme domain. 4 cysteine pairs are disulfide-bonded: Cys24/Cys145, Cys48/Cys133, Cys82/Cys98, and Cys94/Cys112. Residues Glu53 and Asp70 contribute to the active site.

It belongs to the glycosyl hydrolase 22 family.

It is found in the secreted. It catalyses the reaction Hydrolysis of (1-&gt;4)-beta-linkages between N-acetylmuramic acid and N-acetyl-D-glucosamine residues in a peptidoglycan and between N-acetyl-D-glucosamine residues in chitodextrins.. Its function is as follows. Lysozymes have primarily a bacteriolytic function; those in tissues and body fluids are associated with the monocyte-macrophage system and enhance the activity of immunoagents. The sequence is that of Lysozyme C-1 from Anas platyrhynchos (Mallard).